Consider the following 149-residue polypeptide: MKSVDLKILDARMRDYLPTYATPGSAGLDLRACIDKAITLEPGATTLVPTGLAIHVADPGYAAIILPRSGLGHKHGIVLGNLVGLIDSDYQGQLMVSTWNRGQTAFTLEPMERLAQLVIVPVQQVSFNVVDEFGASERGAGGFGSTGRS.

Substrate contacts are provided by residues 68 to 70 (RSG), asparagine 81, 85 to 87 (LID), and methionine 95.

The protein belongs to the dUTPase family. The cofactor is Mg(2+).

The catalysed reaction is dUTP + H2O = dUMP + diphosphate + H(+). It participates in pyrimidine metabolism; dUMP biosynthesis; dUMP from dCTP (dUTP route): step 2/2. Functionally, this enzyme is involved in nucleotide metabolism: it produces dUMP, the immediate precursor of thymidine nucleotides and it decreases the intracellular concentration of dUTP so that uracil cannot be incorporated into DNA. This Bordetella avium (strain 197N) protein is Deoxyuridine 5'-triphosphate nucleotidohydrolase.